The primary structure comprises 257 residues: Global transcriptional regulator CodY (257 aa).

The interval 1-155 (MSLLSKTREL…AATVIGMEIL (155 aa)) is GAF domain. The GTP site is built by Val22, Phe24, Ser43, Arg44, Arg45, and Lys47. Residues Arg61, Thr96, and Phe98 each contribute to the L-isoleucine site. Residues Glu153 and Lys158 each coordinate GTP. The H-T-H motif DNA-binding region spans 203–222 (ASKVADRVGITRSVIVNALR).

Belongs to the CodY family. Homodimer. Homotetramer. May form homodimers under conditions in which energy sources are sufficient (active state) and homotetramers under insufficient nutrient conditions (inactive state).

It is found in the cytoplasm. With respect to regulation, activity of CodY is modulated by interaction with two types of effectors: the branched-chain amino acids (BCAAs) leucine, isoleucine and valine, which are signals of the nutritional status of the cell, and GTP, which may signal the energetic status of the cell. Functionally, DNA-binding global transcriptional regulator which is involved in the adaptive response to starvation and acts by directly or indirectly controlling the expression of numerous genes in response to nutrient availability. During rapid exponential growth, CodY is highly active and represses genes whose products allow adaptation to nutrient depletion. This is Global transcriptional regulator CodY from Staphylococcus aureus (strain Mu3 / ATCC 700698).